The sequence spans 267 residues: LexA repressor (267 aa).

The disordered stretch occupies residues 1-44; the sequence is MSIDESSDNPTPRPKLGRPPKSEADKRAEKEAQKDGKKPALSTR. The span at 20–38 shows a compositional bias: basic and acidic residues; the sequence is PKSEADKRAEKEAQKDGKK. The H-T-H motif DNA-binding region spans 65 to 85; that stretch reads IREIADAVGLHSTSSVSYHLT. A disordered region spans residues 111 to 140; sequence GQLTNESTKKNAGSPQPTSAAIPEPTTEGE. Residues 112-129 show a composition bias toward polar residues; it reads QLTNESTKKNAGSPQPTS. Catalysis depends on for autocatalytic cleavage activity residues serine 191 and lysine 228.

It belongs to the peptidase S24 family. In terms of assembly, homodimer.

It catalyses the reaction Hydrolysis of Ala-|-Gly bond in repressor LexA.. Functionally, represses a number of genes involved in the response to DNA damage (SOS response), including recA and lexA. In the presence of single-stranded DNA, RecA interacts with LexA causing an autocatalytic cleavage which disrupts the DNA-binding part of LexA, leading to derepression of the SOS regulon and eventually DNA repair. In Corynebacterium jeikeium (strain K411), this protein is LexA repressor.